Reading from the N-terminus, the 151-residue chain is Small ribosomal subunit protein uS11 (151 aa).

Ser16 is modified (phosphoserine). Glycyl lysine isopeptide (Lys-Gly) (interchain with G-Cter in SUMO2) cross-links involve residues Lys61, Lys63, and Lys106. A disordered region spans residues 131 to 151; it reads DVTPIPSDSTRRKGGRRGRRL. Thr133 is modified (phosphothreonine). Ser139 carries the post-translational modification Phosphoserine. Positions 142 to 151 are enriched in basic residues; the sequence is RKGGRRGRRL.

Belongs to the universal ribosomal protein uS11 family. As to quaternary structure, component of the small ribosomal subunit. Part of the small subunit (SSU) processome, composed of more than 70 proteins and the RNA chaperone small nucleolar RNA (snoRNA) U3.

It localises to the cytoplasm. The protein resides in the nucleus. It is found in the nucleolus. Component of the small ribosomal subunit. The ribosome is a large ribonucleoprotein complex responsible for the synthesis of proteins in the cell. Part of the small subunit (SSU) processome, first precursor of the small eukaryotic ribosomal subunit. During the assembly of the SSU processome in the nucleolus, many ribosome biogenesis factors, an RNA chaperone and ribosomal proteins associate with the nascent pre-rRNA and work in concert to generate RNA folding, modifications, rearrangements and cleavage as well as targeted degradation of pre-ribosomal RNA by the RNA exosome. The chain is Small ribosomal subunit protein uS11 (Rps14) from Mus musculus (Mouse).